The primary structure comprises 178 residues: Large ribosomal subunit protein uL6 (178 aa).

This sequence belongs to the universal ribosomal protein uL6 family. Part of the 50S ribosomal subunit.

In terms of biological role, this protein binds to the 23S rRNA, and is important in its secondary structure. It is located near the subunit interface in the base of the L7/L12 stalk, and near the tRNA binding site of the peptidyltransferase center. This is Large ribosomal subunit protein uL6 from Thermoplasma volcanium (strain ATCC 51530 / DSM 4299 / JCM 9571 / NBRC 15438 / GSS1).